A 107-amino-acid polypeptide reads, in one-letter code: Quaternary ammonium compound-resistance protein QacG (107 aa).

4 helical membrane passes run 1-21, 26-46, 57-77, and 84-104; these read MHYL…SFLK, FTKL…FYFL, ITYA…SVIV, and LISI…NVFG.

The protein belongs to the drug/metabolite transporter (DMT) superfamily. Small multidrug resistance (SMR) (TC 2.A.7.1) family.

It localises to the cell membrane. Its function is as follows. Multidrug exporter. Is implicated for the resistance to bacteriocidal quaternary ammonium compounds. The chain is Quaternary ammonium compound-resistance protein QacG (qacG) from Staphylococcus sp. (strain ST94).